The chain runs to 702 residues: Elongation factor G (702 aa).

In terms of domain architecture, tr-type G spans 8 to 290 (HRVRNIGIAA…AVAMYLPAPT (283 aa)). Residues 17-24 (AHIDAGKT), 87-91 (DTPGH), and 141-144 (NKMD) contribute to the GTP site.

It belongs to the TRAFAC class translation factor GTPase superfamily. Classic translation factor GTPase family. EF-G/EF-2 subfamily.

It is found in the cytoplasm. Catalyzes the GTP-dependent ribosomal translocation step during translation elongation. During this step, the ribosome changes from the pre-translocational (PRE) to the post-translocational (POST) state as the newly formed A-site-bound peptidyl-tRNA and P-site-bound deacylated tRNA move to the P and E sites, respectively. Catalyzes the coordinated movement of the two tRNA molecules, the mRNA and conformational changes in the ribosome. This Aliarcobacter butzleri (strain RM4018) (Arcobacter butzleri) protein is Elongation factor G.